The chain runs to 499 residues: U4/U6 small nuclear ribonucleoprotein Prp31 (499 aa).

The tract at residues 1 to 37 is disordered; the sequence is MSLADELLADLEEAAEEEEGGSYGEEEEEPAIEDVQE. Positions 7 to 37 are enriched in acidic residues; that stretch reads LLADLEEAAEEEEGGSYGEEEEEPAIEDVQE. Coiled coils occupy residues 85 to 120 and 181 to 215; these read EAAP…KYSK and EEEL…MSFI. One can recognise a Nop domain in the interval 215–333; that stretch reads IAPNLSIIIG…IERKFDKWQE (119 aa). The tract at residues 334–357 is disordered; that stretch reads PPPVKQVKPLPAPLDGQRKKRGGR. The Nuclear localization signal (NLS) motif lies at 351-364; that stretch reads RKKRGGRRYRKMKE. Ser379, Ser395, and Ser432 each carry phosphoserine. Position 438 is an N6-acetyllysine (Lys438). Ser439 is modified (phosphoserine). Phosphothreonine is present on Thr440. Ser450 is modified (phosphoserine). Thr455 is subject to Phosphothreonine. Glycyl lysine isopeptide (Lys-Gly) (interchain with G-Cter in SUMO2) cross-links involve residues Lys471 and Lys478.

It belongs to the PRP31 family. Identified in the spliceosome B complex. Component of the U4/U6-U5 tri-snRNP complex composed of the U4, U6 and U5 snRNAs and at least PRPF3, PRPF4, PRPF6, PRPF8, PRPF31, SNRNP200, TXNL4A, SNRNP40, DDX23, CD2BP2, PPIH, SNU13, EFTUD2, SART1 and USP39. Interacts with a complex formed by SNU13 and U4 snRNA, but not with SNU13 or U4 snRNA alone. The complex formed by SNU13 and PRPF31 also binds U4atac snRNA, a characteristic component of specific, less abundant spliceosomal complexes. Interacts with PRPF6/U5 snRNP-associated 102 kDa protein. Component of some MLL1/MLL complex, at least composed of the core components KMT2A/MLL1, ASH2L, HCFC1/HCF1, WDR5 and RBBP5, as well as the facultative components BACC1, CHD8, E2F6, HSP70, INO80C, KANSL1, LAS1L, MAX, MCRS1, MGA, KAT8/MOF, PELP1, PHF20, PRP31, RING2, RUVB1/TIP49A, RUVB2/TIP49B, SENP3, TAF1, TAF4, TAF6, TAF7, TAF9 and TEX10. Interacts (via its NLS) with CTNNBL1. Interacts with USH1G. In terms of processing, phosphorylated by PRP4K during spliceosome assembly. Ubiquitously expressed.

It localises to the nucleus. It is found in the nucleus speckle. The protein localises to the cajal body. Its function is as follows. Involved in pre-mRNA splicing as component of the spliceosome. Required for the assembly of the U4/U5/U6 tri-snRNP complex, one of the building blocks of the spliceosome. This chain is U4/U6 small nuclear ribonucleoprotein Prp31, found in Homo sapiens (Human).